A 148-amino-acid chain; its full sequence is FAD synthase (148 aa).

ATP-binding positions include 5-6, 10-13, Asp-92, and Tyr-119; these read TF and HPGH.

The protein belongs to the archaeal FAD synthase family. As to quaternary structure, homodimer. The cofactor is a divalent metal cation.

It carries out the reaction FMN + ATP + H(+) = FAD + diphosphate. It participates in cofactor biosynthesis; FAD biosynthesis; FAD from FMN: step 1/1. Functionally, catalyzes the transfer of the AMP portion of ATP to flavin mononucleotide (FMN) to produce flavin adenine dinucleotide (FAD) coenzyme. This is FAD synthase from Methanosphaera stadtmanae (strain ATCC 43021 / DSM 3091 / JCM 11832 / MCB-3).